The primary structure comprises 581 residues: Transcription factor GTE2 (581 aa).

The interval 130–153 is disordered; it reads VKKTKTKKKKIGHGQKRSNPFATD. The span at 131 to 145 shows a compositional bias: basic residues; it reads KKTKTKKKKIGHGQK. The 107-residue stretch at 169–275 folds into the Bromo domain; the sequence is KVLKSMMTTC…SQFDVWFNPT (107 aa). Disordered regions lie at residues 329 to 399 and 470 to 581; these read PLLP…KREM and KRQG…KEAP. Residues 346–365 are compositionally biased toward pro residues; sequence PSPPPSPVQPPPPPSPPPQP. The NET domain maps to 389–470; sequence PKAKDPNKRE…NYRKMASKIK (82 aa). Composition is skewed to basic and acidic residues over residues 390–399 and 493–503; these read KAKDPNKREM and SAEKRGRKGGE. A compositionally biased stretch (acidic residues) spans 504 to 517; sequence AGEEDVDIGEDIPV. Over residues 530–564 the composition is skewed to low complexity; that stretch reads TAAAASGGSSSSGSFSSSGSSSSSDSESGSSSGSD.

It is found in the nucleus. This Arabidopsis thaliana (Mouse-ear cress) protein is Transcription factor GTE2 (GTE2).